A 383-amino-acid polypeptide reads, in one-letter code: Transposase InsI for insertion sequence element IS30C (383 aa).

Residues 213-379 (VNGTPIHERS…TPKEIIERGV (167 aa)) enclose the Integrase catalytic domain.

Belongs to the transposase IS30 family.

Functionally, required for the transposition of the insertion element. The sequence is that of Transposase InsI for insertion sequence element IS30C (insI3) from Escherichia coli (strain K12).